We begin with the raw amino-acid sequence, 753 residues long: Inactive protein-tyrosine phosphatase egg-5 (753 aa).

Disordered stretches follow at residues T26–N46 and R77–P116. A compositionally biased stretch (low complexity) spans N35 to N46. Residues A84 to L94 show a composition bias toward basic and acidic residues. The Tyrosine-protein phosphatase domain occupies M408–F661.

Belongs to the protein-tyrosine phosphatase family. Part of a complex, consisting of pseudophosphatases egg-3, egg-4, egg-5 and kinase mbk-2; this complex is required for the oocyte-to-zygote transition. Interacts (via tyrosine-protein phosphatase domain) with kinase mbk-2 (via 'Tyr-619' and 'Tyr-621'); mbk-2 tyrosine phosphorylation enhances the interaction.

The protein resides in the cytoplasm. The protein localises to the cell cortex. Functionally, inactive phosphatase which acts redundantly with egg-4 in the oocyte-to-zygote transition. Required for polarized cortical actin cytoskeleton rearrangement in the oocyte before and after fertilization. Together with egg-4, required for the cortical localization of kinase mbk-2 in maturing oocyte until the end of meiosis I. Also required for kinase mbk-2, pseudophosphatase egg-3 and chitin synthase chs-1 localization to cytoplasmic foci after fertilization. The sequence is that of Inactive protein-tyrosine phosphatase egg-5 from Caenorhabditis elegans.